Here is a 100-residue protein sequence, read N- to C-terminus: Urease subunit gamma (100 aa).

It belongs to the urease gamma subunit family. As to quaternary structure, heterotrimer of UreA (gamma), UreB (beta) and UreC (alpha) subunits. Three heterotrimers associate to form the active enzyme.

It localises to the cytoplasm. It carries out the reaction urea + 2 H2O + H(+) = hydrogencarbonate + 2 NH4(+). It participates in nitrogen metabolism; urea degradation; CO(2) and NH(3) from urea (urease route): step 1/1. The protein is Urease subunit gamma of Prochlorococcus marinus (strain NATL2A).